A 161-amino-acid chain; its full sequence is Allophycocyanin alpha-B chain (161 aa).

Residue Asn-71 is modified to N4-methylasparagine. Position 81 (Cys-81) interacts with (2R,3E)-phycocyanobilin.

It belongs to the phycobiliprotein family. Post-translationally, contains one covalently linked bilin chromophore.

It is found in the plastid. It localises to the chloroplast thylakoid membrane. Its function is as follows. Allophycocyanin is a photosynthetic bile pigment-protein complex with maximum absorption at approximately 650 nanometers. This is Allophycocyanin alpha-B chain (apcD) from Porphyra purpurea (Red seaweed).